The chain runs to 514 residues: Cytochrome P450 monooxygenase aneD (514 aa).

Residues 6–26 traverse the membrane as a helical segment; the sequence is ICTLLAVIATTSLGLLFLSII. Residues Asn-113, Asn-261, and Asn-347 are each glycosylated (N-linked (GlcNAc...) asparagine). A heme-binding site is contributed by Cys-424.

The protein belongs to the cytochrome P450 family. Requires heme as cofactor.

The protein localises to the membrane. It carries out the reaction asperaculane D + reduced [NADPH--hemoprotein reductase] + O2 = asperaculane E + oxidized [NADPH--hemoprotein reductase] + H2O + H(+). The protein operates within secondary metabolite biosynthesis. In terms of biological role, cytochrome P450 monooxygenase; part of the gene cluster that mediates the biosynthesis of aculenes, a unique type of norsesquiterpenes that contain a nordaucane skeleton linked to an L-proline moiety and are of mixed biosynthetic origin. The pathway begins with the synthesis of dauca-4,7-diene by the terpene cyclase aneC using farnesyl pyrophosphate (FPP) as substrate. The cytochrome P450 monooxygenase aneF then performs the initial oxidation at C-12 of dauca-4,7-diene to yield asperaculane D. Asperaculane D is substrate of the cytochrome P450 monooxygenase aneD for C-10 hydroxylation to yield asperaculane E. The cytochrome P450 monooxygenase aneG then converts asperaculane E into aculene D via C-2 oxidation. The monomodular nonribosomal peptide synthtase aneB adenylates L-proline and the thiohydrolase aneE transfers this activated L-proline derivative to aculenes D and C to produce respectively aculenes B and A. The dioxygenase aneA converts aculene D into aculene C, and aculene B into aculene A by introducing the 5,6-alkene moiety. Asperculanes A, B, C and F, as well as 14-prolyl asperculane C, might be shunt products of the pathway. In Aspergillus aculeatus (strain ATCC 16872 / CBS 172.66 / WB 5094), this protein is Cytochrome P450 monooxygenase aneD.